The primary structure comprises 433 residues: Legumain (433 aa).

Positions 1-17 are cleaved as a signal peptide; sequence MIWEFTVLLSLVLGTGA. The propeptide occupies 18–25; the sequence is VPLEDPED. Residue Asn91 is glycosylated (N-linked (GlcNAc...) asparagine). His148 is a catalytic residue. N-linked (GlcNAc...) asparagine glycosylation occurs at Asn167. Cys189 (nucleophile) is an active-site residue. N-linked (GlcNAc...) asparagine glycans are attached at residues Asn263 and Asn272. A propeptide spanning residues 324–433 is cleaved from the precursor; sequence DLQESRRLVQ…SMNKVCHGYY (110 aa). 2 disulfide bridges follow: Cys378–Cys412 and Cys390–Cys429.

It belongs to the peptidase C13 family. In terms of assembly, homodimer before autocatalytic removal of the propeptide. Monomer after autocatalytic processing. May interact with integrins. Activated by autocatalytic processing at pH 4. In terms of tissue distribution, detected in kidney (at protein level).

The protein resides in the lysosome. The enzyme catalyses Hydrolysis of proteins and small molecule substrates at -Asn-|-Xaa- bonds.. Functionally, has a strict specificity for hydrolysis of asparaginyl bonds. Can also cleave aspartyl bonds slowly, especially under acidic conditions. Involved in the processing of proteins for MHC class II antigen presentation in the lysosomal/endosomal system. Also involved in MHC class I antigen presentation in cross-presenting dendritic cells by mediating cleavage and maturation of Perforin-2 (MPEG1), thereby promoting antigen translocation in the cytosol. Required for normal lysosomal protein degradation in renal proximal tubules. Required for normal degradation of internalized EGFR. Plays a role in the regulation of cell proliferation via its role in EGFR degradation. The protein is Legumain (LGMN) of Bos taurus (Bovine).